We begin with the raw amino-acid sequence, 337 residues long: Glyceraldehyde-3-phosphate dehydrogenase (337 aa).

NAD(+)-binding positions include 12–13 (RI), Asp-34, and Arg-79. D-glyceraldehyde 3-phosphate is bound by residues 150–152 (SCT), Thr-181, 210–211 (TG), and Arg-233. Catalysis depends on Cys-151, which acts as the Nucleophile. Position 315 (Asn-315) interacts with NAD(+).

This sequence belongs to the glyceraldehyde-3-phosphate dehydrogenase family. Homotetramer.

The protein localises to the cytoplasm. It catalyses the reaction D-glyceraldehyde 3-phosphate + phosphate + NAD(+) = (2R)-3-phospho-glyceroyl phosphate + NADH + H(+). It participates in carbohydrate degradation; glycolysis; pyruvate from D-glyceraldehyde 3-phosphate: step 1/5. This is Glyceraldehyde-3-phosphate dehydrogenase from Cryphonectria parasitica (Chestnut blight fungus).